Consider the following 80-residue polypeptide: Pancreatic polypeptide (80 aa).

An N-terminal signal peptide occupies residues 1 to 25 (MPPRWASLLLLACSLLLLAVPPGTA). Position 61 is a tyrosine amide (Tyr61). Positions 65–80 (SSSRVLCEEPMGAAGC) are excised as a propeptide.

The protein belongs to the NPY family.

The protein resides in the secreted. In terms of biological role, hormone secreted by pancreatic cells that acts as a regulator of pancreatic and gastrointestinal functions. The polypeptide is Pancreatic polypeptide (PPY) (Gallus gallus (Chicken)).